Consider the following 287-residue polypeptide: Lycopene elongase/hydratase (287 aa).

7 consecutive transmembrane segments (helical) span residues I15–I35, W37–I57, T87–G107, F137–I157, M166–V186, L218–I238, and V265–H285.

It belongs to the UbiA prenyltransferase family.

It is found in the cell membrane. It carries out the reaction all-trans-lycopene + dimethylallyl diphosphate + A + H2O = nonaflavuxanthin + AH2 + diphosphate. It catalyses the reaction nonaflavuxanthin + dimethylallyl diphosphate + A + H2O = flavuxanthin + AH2 + diphosphate. The protein operates within carotenoid biosynthesis. Catalyzes the elongation of the C(40) carotenoid all-trans-lycopene to the acyclic C(50) carotenoid flavuxanthin during decaprenoxanthin biosynthesis. Acts as a bifunctional enzyme that catalyzes the elongation of lycopene by attaching a C(5) isoprene unit at C-2, as well as the hydroxylation of the new isoprene unit. The enzyme acts at both ends of the substrate, forming the C(50) carotenoid flavuxanthin via the C(45) intermediate nonaflavuxanthin. In Corynebacterium glutamicum (strain ATCC 13032 / DSM 20300 / JCM 1318 / BCRC 11384 / CCUG 27702 / LMG 3730 / NBRC 12168 / NCIMB 10025 / NRRL B-2784 / 534), this protein is Lycopene elongase/hydratase.